Here is a 261-residue protein sequence, read N- to C-terminus: Kallikrein 1-related peptidase b5 (261 aa).

The signal sequence occupies residues 1–18 (MWFLILFLALSLGGIDAA). A propeptide spans 19-24 (PPVQSR) (activation peptide). A Peptidase S1 domain is found at 25–258 (IFGGFNCEKN…FNSWIKDTIA (234 aa)). 5 cysteine pairs are disulfide-bonded: cysteine 31-cysteine 173, cysteine 50-cysteine 66, cysteine 152-cysteine 219, cysteine 184-cysteine 198, and cysteine 209-cysteine 234. Residue histidine 65 is the Charge relay system of the active site. Asparagine 102 is a glycosylation site (N-linked (GlcNAc...) asparagine). The active-site Charge relay system is the aspartate 120. Serine 213 serves as the catalytic Charge relay system.

Belongs to the peptidase S1 family. Kallikrein subfamily.

It catalyses the reaction Preferential cleavage of Arg-|-Xaa bonds in small molecule substrates. Highly selective action to release kallidin (lysyl-bradykinin) from kininogen involves hydrolysis of Met-|-Xaa or Leu-|-Xaa.. Functionally, glandular kallikreins cleave Met-Lys and Arg-Ser bonds in kininogen to release Lys-bradykinin. This is Kallikrein 1-related peptidase b5 (Klk1b5) from Mus musculus (Mouse).